We begin with the raw amino-acid sequence, 406 residues long: 5-cytosine rRNA methyltransferase NSUN4 (406 aa).

Residues G207, G208, K209, D226, R231, D259, G260, and D277 each coordinate S-adenosyl-L-methionine. C332 (nucleophile) is an active-site residue.

The protein belongs to the class I-like SAM-binding methyltransferase superfamily. RsmB/NOP family.

The protein localises to the mitochondrion. It carries out the reaction a cytidine in rRNA + S-adenosyl-L-methionine = a 5-methylcytidine in rRNA + S-adenosyl-L-homocysteine + H(+). The enzyme catalyses a cytidine in mRNA + S-adenosyl-L-methionine = a 5-methylcytidine in mRNA + S-adenosyl-L-homocysteine + H(+). Functionally, mitochondrial RNA cytosine C(5)-methyltransferase that methylates cytosine to 5-methylcytosine (m5C) in various RNAs, such as rRNAs, mRNAs and some long non-coding RNAs (lncRNAs). Involved in mitochondrial ribosome small subunit (SSU) maturation by catalyzing methylation of mitochondrial 12S rRNA. The protein is 5-cytosine rRNA methyltransferase NSUN4 (nsun4) of Xenopus laevis (African clawed frog).